The primary structure comprises 563 residues: Arginine--tRNA ligase (563 aa).

The short motif at 120–130 (PNIAKPFHIGH) is the 'HIGH' region element.

The protein belongs to the class-I aminoacyl-tRNA synthetase family. In terms of assembly, monomer.

Its subcellular location is the cytoplasm. It carries out the reaction tRNA(Arg) + L-arginine + ATP = L-arginyl-tRNA(Arg) + AMP + diphosphate. The chain is Arginine--tRNA ligase from Clostridium botulinum (strain Okra / Type B1).